A 438-amino-acid chain; its full sequence is UDP-N-acetylmuramoylalanine--D-glutamate ligase (438 aa).

112-118 (GSNGKST) contributes to the ATP binding site.

Belongs to the MurCDEF family.

It localises to the cytoplasm. The enzyme catalyses UDP-N-acetyl-alpha-D-muramoyl-L-alanine + D-glutamate + ATP = UDP-N-acetyl-alpha-D-muramoyl-L-alanyl-D-glutamate + ADP + phosphate + H(+). Its pathway is cell wall biogenesis; peptidoglycan biosynthesis. In terms of biological role, cell wall formation. Catalyzes the addition of glutamate to the nucleotide precursor UDP-N-acetylmuramoyl-L-alanine (UMA). In Shigella boydii serotype 4 (strain Sb227), this protein is UDP-N-acetylmuramoylalanine--D-glutamate ligase.